Here is a 394-residue protein sequence, read N- to C-terminus: 3-amino-4-hydroxybenzoate 2-monooxygenase (394 aa).

FAD is bound by residues alanine 16 and arginine 109. Catalysis depends on tyrosine 214, which acts as the Proton acceptor. Residue aspartate 287 participates in FAD binding.

The protein belongs to the 6-hydroxynicotinate 3-monooxygenase family. The cofactor is FAD.

It catalyses the reaction 3-amino-4-hydroxybenzoate + NADPH + O2 + H(+) = 3-amino-2,4-dihydroxybenzoate + NADP(+) + H2O. It functions in the pathway antibiotic biosynthesis. In terms of biological role, part of a gene cluster involved in the biosynthesis of cremeomycin, a light-sensitive o-diazoquinone with antibacterial and antiproliferative effects. Catalyzes the hydroxylation of 3-amino-4-hydroxybenzoate (3,4-AHBA) to 3-amino-2,4-dihydroxybenzoate (3,2,4-ADHBA). This chain is 3-amino-4-hydroxybenzoate 2-monooxygenase, found in Streptomyces cremeus.